Reading from the N-terminus, the 388-residue chain is Mannitol-1-phosphate 5-dehydrogenase (388 aa).

5–16 is a binding site for NAD(+); it reads AVHFGGGNIGRG. Lysine 213 is a catalytic residue.

Belongs to the mannitol dehydrogenase family. Monomer.

It catalyses the reaction D-mannitol 1-phosphate + NAD(+) = beta-D-fructose 6-phosphate + NADH + H(+). Its function is as follows. Catalyzes the NAD(H)-dependent interconversion of D-fructose 6-phosphate and D-mannitol 1-phosphate in the mannitol metabolic pathway. This chain is Mannitol-1-phosphate 5-dehydrogenase, found in Ajellomyces capsulatus (strain NAm1 / WU24) (Darling's disease fungus).